A 583-amino-acid polypeptide reads, in one-letter code: Radixin (583 aa).

Residues 5–295 form the FERM domain; that stretch reads INVRVTTMDA…GNHELYMRRR (291 aa). A 1,2-diacyl-sn-glycero-3-phospho-(1D-myo-inositol) contacts are provided by residues 60 to 63 and lysine 278; that span reads KLNK. 2 disordered regions span residues 310–336 and 436–527; these read REEK…AEKE and KKKE…VKKQ. Basic and acidic residues-rich tracts occupy residues 436–447 and 455–464; these read KKKEEEASEWQH and DLEKTKEELK. A compositionally biased stretch (pro residues) spans 469–480; the sequence is APPPPPPPPVIP. 2 stretches are compositionally biased toward basic and acidic residues: residues 483–492 and 506–525; these read ENEHDEHDEN and MNHR…ERVK.

The protein resides in the cell membrane. Its subcellular location is the cytoplasm. It is found in the cytoskeleton. Its function is as follows. Probably plays a crucial role in the binding of the barbed end of actin filaments to the plasma membrane. In Gallus gallus (Chicken), this protein is Radixin (RDX).